The primary structure comprises 1094 residues: Transport and Golgi organization protein 6 homolog (1094 aa).

The chain crosses the membrane as a helical span at residues 468 to 488 (LTVLMDSLLPVLGVLFLLYCF). Ser-556 carries the phosphoserine modification. Positions 777–795 (EEQQQTSHERPTDVAHSHL) are enriched in basic and acidic residues. The disordered stretch occupies residues 777–834 (EEQQQTSHERPTDVAHSHLEQQQSHETAPQTGLQSNAPIIPQGVNEPSTTTSQKSGSV). Polar residues-rich tracts occupy residues 796-813 (EQQQ…QSNA) and 821-834 (NEPS…SGSV). HEAT repeat units follow at residues 873-909 (LEMQ…SDVY) and 952-988 (SKYR…CQRL).

Belongs to the Tango6 family.

It is found in the membrane. This chain is Transport and Golgi organization protein 6 homolog (TANGO6), found in Homo sapiens (Human).